Reading from the N-terminus, the 545-residue chain is Probable bifunctional tRNA threonylcarbamoyladenosine biosynthesis protein (545 aa).

Positions 1-329 are kae1; it reads MKNTFILGIE…YRTDDVKVTW (329 aa). 3 residues coordinate Fe cation: His113, His117, and Tyr134. Residues 134-138, Asp166, Gly179, Glu183, and Asn262 each bind L-threonylcarbamoyladenylate; that span reads YVSGA. Asp290 contacts Fe cation. The Protein kinase domain maps to 340 to 545; that stretch reads EISPGTSLKL…EEIKKRARYA (206 aa). Residues 353 to 361 and Lys375 each bind ATP; that span reads LDNGAEAIV. The active-site Proton acceptor; for kinase activity is Asp462.

In the N-terminal section; belongs to the KAE1 / TsaD family. The protein in the C-terminal section; belongs to the protein kinase superfamily. Tyr protein kinase family. BUD32 subfamily. As to quaternary structure, component of the KEOPS complex that consists of Kae1, Bud32, Cgi121 and Pcc1; the whole complex dimerizes. Fe(2+) is required as a cofactor.

The protein localises to the cytoplasm. The enzyme catalyses L-seryl-[protein] + ATP = O-phospho-L-seryl-[protein] + ADP + H(+). It carries out the reaction L-threonyl-[protein] + ATP = O-phospho-L-threonyl-[protein] + ADP + H(+). The catalysed reaction is L-threonylcarbamoyladenylate + adenosine(37) in tRNA = N(6)-L-threonylcarbamoyladenosine(37) in tRNA + AMP + H(+). Required for the formation of a threonylcarbamoyl group on adenosine at position 37 (t(6)A37) in tRNAs that read codons beginning with adenine. Is a component of the KEOPS complex that is probably involved in the transfer of the threonylcarbamoyl moiety of threonylcarbamoyl-AMP (TC-AMP) to the N6 group of A37. The Kae1 domain likely plays a direct catalytic role in this reaction. The Bud32 domain probably displays kinase activity that regulates Kae1 function. The protein is Probable bifunctional tRNA threonylcarbamoyladenosine biosynthesis protein of Methanosarcina barkeri (strain Fusaro / DSM 804).